Here is a 191-residue protein sequence, read N- to C-terminus: Phosphoheptose isomerase (191 aa).

The region spanning 37–191 (ITSSLKQGGK…LILLIEQSLL (155 aa)) is the SIS domain. Substrate is bound at residue 52-54 (NGG). Positions 61 and 65 each coordinate Zn(2+). Substrate is bound by residues glutamate 65, 93 to 94 (ND), 119 to 121 (STS), serine 124, and glutamine 172. Zn(2+)-binding residues include glutamine 172 and histidine 180.

It belongs to the SIS family. GmhA subfamily. It depends on Zn(2+) as a cofactor.

It localises to the cytoplasm. It carries out the reaction 2 D-sedoheptulose 7-phosphate = D-glycero-alpha-D-manno-heptose 7-phosphate + D-glycero-beta-D-manno-heptose 7-phosphate. It participates in carbohydrate biosynthesis; D-glycero-D-manno-heptose 7-phosphate biosynthesis; D-glycero-alpha-D-manno-heptose 7-phosphate and D-glycero-beta-D-manno-heptose 7-phosphate from sedoheptulose 7-phosphate: step 1/1. Catalyzes the isomerization of sedoheptulose 7-phosphate in D-glycero-D-manno-heptose 7-phosphate. The polypeptide is Phosphoheptose isomerase (Cytophaga hutchinsonii (strain ATCC 33406 / DSM 1761 / CIP 103989 / NBRC 15051 / NCIMB 9469 / D465)).